Consider the following 169-residue polypeptide: SsrA-binding protein (169 aa).

Belongs to the SmpB family.

The protein resides in the cytoplasm. Functionally, required for rescue of stalled ribosomes mediated by trans-translation. Binds to transfer-messenger RNA (tmRNA), required for stable association of tmRNA with ribosomes. tmRNA and SmpB together mimic tRNA shape, replacing the anticodon stem-loop with SmpB. tmRNA is encoded by the ssrA gene; the 2 termini fold to resemble tRNA(Ala) and it encodes a 'tag peptide', a short internal open reading frame. During trans-translation Ala-aminoacylated tmRNA acts like a tRNA, entering the A-site of stalled ribosomes, displacing the stalled mRNA. The ribosome then switches to translate the ORF on the tmRNA; the nascent peptide is terminated with the 'tag peptide' encoded by the tmRNA and targeted for degradation. The ribosome is freed to recommence translation, which seems to be the essential function of trans-translation. The polypeptide is SsrA-binding protein (Mycolicibacterium paratuberculosis (strain ATCC BAA-968 / K-10) (Mycobacterium paratuberculosis)).